A 409-amino-acid polypeptide reads, in one-letter code: MKGILHGLRVVEGSAFVAAPLGGMTLAQLGADVIRFDPIGGGLDYKRWPVTLDGKHSLFWAGLNKGKRSIAIDIRHPRGQELLTQLICAPGEHAGLFITNFPARGWLSYDELKRHRADLIMVNLVGRRDGGSEVDYTVNPQLGLPFMTGPVTTPDVVNHVLPAWDIVTGQMIALGLLAAERHRRLTGEGQLVKIALKDVGLAMIGHLGMIAEVMINDTDRPRQGNYLYGAFGRDFETLDGKRVMVVGLTDLQWKALGKATGLTDAFNALGARLGLNMDEEGDRFRARHEIAALLEPWFHARTLAEVRRIFEQHRVTWAPYRTVREAIAQDPDCSTDNPMFAMVEQPGIGSYLMPGSPLDFTAVPRLPVQPAPRLGEHTDEILLEVLGLSEAEVGRLHDEGIVAGPDRAA.

Residue Asp-165 is the Nucleophile of the active site.

Belongs to the CoA-transferase III family. Mesaconyl-CoA isomerase subfamily. Homodimer.

It catalyses the reaction 2-methylfumaryl-CoA = 3-methylfumaryl-CoA. With respect to regulation, partially inhibited by hydroxylamine. Involved in the glyoxylate assimilation cycle used to regenerate acetyl-CoA and produce pyruvate as universal precursor for biosynthesis. This reaction involves an intramolecular CoA transferase that catalyzes the reversible transfer of the CoA moiety from the C1-carboxyl group of mesaconyl-CoA to the C4-carboxyl group. It does not require free mesaconate as CoA acceptor. The polypeptide is 2-methylfumaryl-CoA isomerase (mct) (Chloroflexus aurantiacus (strain ATCC 29366 / DSM 635 / J-10-fl)).